Here is a 310-residue protein sequence, read N- to C-terminus: Taste receptor type 2 member 125 (310 aa).

The Extracellular portion of the chain corresponds to methionine 1–glycine 2. Residues isoleucine 3–alanine 23 form a helical membrane-spanning segment. Topologically, residues asparagine 24–glutamine 46 are cytoplasmic. Residues isoleucine 47–leucine 67 traverse the membrane as a helical segment. Topologically, residues isoleucine 68 to asparagine 87 are extracellular. A helical membrane pass occupies residues isoleucine 88–phenylalanine 108. Over leucine 109–lysine 128 the chain is Cytoplasmic. The helical transmembrane segment at valine 129–asparagine 149 threads the bilayer. Over methionine 150 to threonine 185 the chain is Extracellular. N-linked (GlcNAc...) asparagine glycosylation is found at asparagine 162, asparagine 171, and asparagine 183. The chain crosses the membrane as a helical span at residues phenylalanine 186–tryptophan 206. At arginine 207 to glutamine 232 the chain is on the cytoplasmic side. Residues methionine 233–tryptophan 253 traverse the membrane as a helical segment. The Extracellular segment spans residues threonine 254 to asparagine 261. A helical membrane pass occupies residues asparagine 262–leucine 282. The Cytoplasmic portion of the chain corresponds to arginine 283–proline 310.

This sequence belongs to the G-protein coupled receptor T2R family.

It is found in the membrane. Functionally, putative taste receptor which may play a role in the perception of bitterness. This is Taste receptor type 2 member 125 from Rattus norvegicus (Rat).